A 684-amino-acid polypeptide reads, in one-letter code: Suppressor of presenilin protein 3 (684 aa).

5 consecutive C2H2-type zinc fingers follow at residues 21–43 (YKCH…LRRH), 48–71 (FDCE…LQSH), 123–145 (YKCP…ILSH), 261–283 (YLCR…FRHH), and 291–313 (WTCI…VKMH). 3 disordered regions span residues 337 to 359 (DLNK…HSDM), 419 to 440 (KNNS…SKSD), and 469 to 501 (TSKF…DQFQ). 2 consecutive C2H2-type zinc fingers follow at residues 590–612 (RECT…RDKH) and 618–641 (HTCP…FVDH). The interval 652–684 (LPSSDSEDDNIPVPPDTPQRKKKAPKRGKRRGW) is disordered. The span at 671–684 (RKKKAPKRGKRRGW) shows a compositional bias: basic residues.

The protein localises to the nucleus. Its function is as follows. Probable transcriptional regulator, which participates in the transcriptional repression of the presenilin protein hop-1. This chain is Suppressor of presenilin protein 3 (spr-3), found in Caenorhabditis elegans.